Consider the following 371-residue polypeptide: MVDWSTLPEELLHFIAARSFSLVEYKRFSSICVSWHSSVSGVKKNPFHRRPLIDFNPIAPSETLLEDHVFSCNPGAFLSRAAFFRVTLSSSPSKGWIIKSDMDTNSGRFHLLNPLSRFPLRISSESLDLLDFTVSEIQESYAVLKDAKGRLPNPGYQRSALVKVKEGDDHHHGILGIGRDGTINYWNGNVLNGFKQMGHHFSDIIVHKGVTYVLDSKGIVWCINSDLEMSRYETSLDENMTNGCRRYYMRFVDCCGELYVIKRLPKENSRKRKSTLFQFSRTAGFKVYKIDKELAKWVEVKTLGDNAFVMATDTCFSVLAHEYYGCLPNSIYFIEDLEPKVFQLDNGNGSSITRKSESSESSFEMFFPSFL.

Positions 2–49 constitute an F-box domain; it reads VDWSTLPEELLHFIAARSFSLVEYKRFSSICVSWHSSVSGVKKNPFHR.

The sequence is that of Probable F-box protein At1g65740 from Arabidopsis thaliana (Mouse-ear cress).